The sequence spans 483 residues: NADH-quinone oxidoreductase subunit N (483 aa).

14 helical membrane-spanning segments follow: residues A13–V33, Y39–V57, P76–S96, F110–F130, L131–Q151, F165–V185, I206–V226, P240–V260, M277–S297, M302–S322, M330–L350, L373–F393, I406–Y426, and L459–I479.

Belongs to the complex I subunit 2 family. In terms of assembly, NDH-1 is composed of 14 different subunits. Subunits NuoA, H, J, K, L, M, N constitute the membrane sector of the complex.

The protein resides in the cell inner membrane. The catalysed reaction is a quinone + NADH + 5 H(+)(in) = a quinol + NAD(+) + 4 H(+)(out). NDH-1 shuttles electrons from NADH, via FMN and iron-sulfur (Fe-S) centers, to quinones in the respiratory chain. The immediate electron acceptor for the enzyme in this species is believed to be ubiquinone. Couples the redox reaction to proton translocation (for every two electrons transferred, four hydrogen ions are translocated across the cytoplasmic membrane), and thus conserves the redox energy in a proton gradient. The chain is NADH-quinone oxidoreductase subunit N from Thiobacillus denitrificans (strain ATCC 25259 / T1).